The following is a 321-amino-acid chain: Ubiquinone biosynthesis protein COQ4, mitochondrial (321 aa).

Histidine 205, aspartate 206, histidine 209, and glutamate 221 together coordinate Zn(2+).

This sequence belongs to the COQ4 family. In terms of assembly, component of a multi-subunit COQ enzyme complex, composed of at least COQ3, COQ4, COQ5, COQ6, COQ7 and COQ9. Zn(2+) is required as a cofactor.

It is found in the mitochondrion inner membrane. It carries out the reaction a 4-hydroxy-3-methoxy-5-(all-trans-polyprenyl)benzoate + H(+) = a 2-methoxy-6-(all-trans-polyprenyl)phenol + CO2. The protein operates within cofactor biosynthesis; ubiquinone biosynthesis. Functionally, lyase that catalyzes the C1-decarboxylation of 4-hydroxy-3-methoxy-5-(all-trans-polyprenyl)benzoic acid into 2-methoxy-6-(all-trans-polyprenyl)phenol during ubiquinone biosynthesis. The chain is Ubiquinone biosynthesis protein COQ4, mitochondrial from Candida tropicalis (strain ATCC MYA-3404 / T1) (Yeast).